We begin with the raw amino-acid sequence, 954 residues long: Glycine dehydrogenase (decarboxylating) (954 aa).

Residues 1–13 (MTELLQSLSTQNE) show a composition bias toward polar residues. Positions 1–24 (MTELLQSLSTQNEFVARHNGPNKS) are disordered. Lys704 is subject to N6-(pyridoxal phosphate)lysine.

The protein belongs to the GcvP family. The glycine cleavage system is composed of four proteins: P, T, L and H. The cofactor is pyridoxal 5'-phosphate.

The catalysed reaction is N(6)-[(R)-lipoyl]-L-lysyl-[glycine-cleavage complex H protein] + glycine + H(+) = N(6)-[(R)-S(8)-aminomethyldihydrolipoyl]-L-lysyl-[glycine-cleavage complex H protein] + CO2. Functionally, the glycine cleavage system catalyzes the degradation of glycine. The P protein binds the alpha-amino group of glycine through its pyridoxal phosphate cofactor; CO(2) is released and the remaining methylamine moiety is then transferred to the lipoamide cofactor of the H protein. The protein is Glycine dehydrogenase (decarboxylating) of Vibrio campbellii (strain ATCC BAA-1116).